The following is a 463-amino-acid chain: ATP synthase subunit beta (463 aa).

Position 151 to 158 (151 to 158 (GGAGVGKT)) interacts with ATP.

Belongs to the ATPase alpha/beta chains family. In terms of assembly, F-type ATPases have 2 components, CF(1) - the catalytic core - and CF(0) - the membrane proton channel. CF(1) has five subunits: alpha(3), beta(3), gamma(1), delta(1), epsilon(1). CF(0) has three main subunits: a(1), b(2) and c(9-12). The alpha and beta chains form an alternating ring which encloses part of the gamma chain. CF(1) is attached to CF(0) by a central stalk formed by the gamma and epsilon chains, while a peripheral stalk is formed by the delta and b chains.

Its subcellular location is the cell membrane. The enzyme catalyses ATP + H2O + 4 H(+)(in) = ADP + phosphate + 5 H(+)(out). In terms of biological role, produces ATP from ADP in the presence of a proton gradient across the membrane. The catalytic sites are hosted primarily by the beta subunits. The chain is ATP synthase subunit beta from Clostridium botulinum (strain Loch Maree / Type A3).